The sequence spans 231 residues: Ferredoxin-type protein NapG (231 aa).

The segment at residues 1 to 41 (MSRSAKPQNGRRRFLRDVVRTAGGLAAVGVALGLQQQTARA) is a signal peptide (tat-type signal). 4Fe-4S ferredoxin-type domains are found at residues 50–81 (GAIN…LATL), 89–121 (TPYF…REIE), 130–166 (LAVL…LELE), and 177–208 (FLPT…VLPL). Positions 61, 64, 67, 71, 99, 102, 107, 111, 139, 147, 150, 154, 186, 189, 192, and 196 each coordinate [4Fe-4S] cluster.

Requires [4Fe-4S] cluster as cofactor. In terms of processing, exported by the Tat system. The position of the signal peptide cleavage has not been experimentally proven.

It localises to the periplasm. Required for electron transfer from ubiquinol, via NapC, to the periplasmic nitrate reductase NapAB complex. This Escherichia coli (strain K12) protein is Ferredoxin-type protein NapG (napG).